A 429-amino-acid polypeptide reads, in one-letter code: UDP-N-acetylglucosamine 1-carboxyvinyltransferase (429 aa).

22 to 23 (KN) serves as a coordination point for phosphoenolpyruvate. Residue arginine 102 coordinates UDP-N-acetyl-alpha-D-glucosamine. The Proton donor role is filled by cysteine 126. A 2-(S-cysteinyl)pyruvic acid O-phosphothioketal modification is found at cysteine 126. UDP-N-acetyl-alpha-D-glucosamine contacts are provided by residues 131 to 135 (RPVDL), aspartate 316, and isoleucine 338.

The protein belongs to the EPSP synthase family. MurA subfamily.

It is found in the cytoplasm. The enzyme catalyses phosphoenolpyruvate + UDP-N-acetyl-alpha-D-glucosamine = UDP-N-acetyl-3-O-(1-carboxyvinyl)-alpha-D-glucosamine + phosphate. The protein operates within cell wall biogenesis; peptidoglycan biosynthesis. Cell wall formation. Adds enolpyruvyl to UDP-N-acetylglucosamine. This Methylocella silvestris (strain DSM 15510 / CIP 108128 / LMG 27833 / NCIMB 13906 / BL2) protein is UDP-N-acetylglucosamine 1-carboxyvinyltransferase.